The chain runs to 133 residues: Protein msa (133 aa).

Helical transmembrane passes span 3–23 (YLIL…AIGL), 27–47 (ILAA…ILFF), 55–75 (YIFF…VHLM), and 103–123 (FGFD…IILY).

The protein resides in the cell membrane. Functionally, accessory element involved in the expression of sarA and several virulence factors. Modulates SarA production and/or function in a strain-dependent manner. Affects the transcription of the accessory gene regulator (agr) and genes encoding virulence factors including alpha toxin (hla) and protein A (spa). The polypeptide is Protein msa (msa) (Staphylococcus aureus (strain bovine RF122 / ET3-1)).